Reading from the N-terminus, the 790-residue chain is AMP deaminase (790 aa).

The span at 1–14 shows a compositional bias: polar residues; it reads MSTPLRGSSPQVSF. A disordered region spans residues 1 to 26; the sequence is MSTPLRGSSPQVSFYESELDQEGGSD. Residues His-221 and His-223 each contribute to the Zn(2+) site. Residues His-223 and 292 to 297 each bind substrate; that span reads KFNLKY. A Zn(2+)-binding site is contributed by His-488. Residue Glu-491 participates in substrate binding. The active-site Proton acceptor is His-510. Asp-565 lines the Zn(2+) pocket. Substrate is bound at residue 566 to 569; sequence DPLQ. Disordered stretches follow at residues 698-726 and 739-790; these read NKLR…SSPG and PPPL…KSDK. 2 stretches are compositionally biased toward low complexity: residues 706-726 and 750-781; these read GSTP…SSPG and NNNN…TTTN.

It belongs to the metallo-dependent hydrolases superfamily. Adenosine and AMP deaminases family. In terms of assembly, homodimer. The cofactor is Zn(2+).

It localises to the cytoplasm. The catalysed reaction is AMP + H2O + H(+) = IMP + NH4(+). The protein operates within purine metabolism; IMP biosynthesis via salvage pathway; IMP from AMP: step 1/1. With respect to regulation, activated by ATP, inhibited by GTP, EDTA and inorganic phosphate. Its function is as follows. Catalyzes the conversion of adenosine monophosphate (AMP) to inosine monophosphate (IMP) and ammonia (NH4(+)). Participates in the regulation of the adenylated nucleotide pool and the interconversion to guanylated nucleotides during early morphodifferentiation. The protein is AMP deaminase (amdA) of Dictyostelium discoideum (Social amoeba).